The following is a 26-amino-acid chain: Thrombin-like enzyme LmrSP-3 (26 aa).

It belongs to the peptidase S1 family. Snake venom subfamily. Expressed by the venom gland.

Its subcellular location is the secreted. In terms of biological role, thrombin-like snake venom serine protease that cleaves alpha-chain of fibrinogen (FGA) releases only fibrinopeptide A. Shows coagulant, esterase and amidase activities. This chain is Thrombin-like enzyme LmrSP-3, found in Lachesis muta rhombeata (Bushmaster).